The primary structure comprises 580 residues: NADH-quinone oxidoreductase subunit C/D (580 aa).

An NADH dehydrogenase I subunit C region spans residues 1 to 171 (MSLDQAIPEA…PPFVLTDRLF (171 aa)). The interval 195–580 (ELMVLNFGPH…IDFVMSDVDR (386 aa)) is NADH dehydrogenase I subunit D.

The protein in the N-terminal section; belongs to the complex I 30 kDa subunit family. It in the C-terminal section; belongs to the complex I 49 kDa subunit family. NDH-1 is composed of 13 different subunits. Subunits NuoB, CD, E, F, and G constitute the peripheral sector of the complex.

The protein localises to the cell inner membrane. It catalyses the reaction a quinone + NADH + 5 H(+)(in) = a quinol + NAD(+) + 4 H(+)(out). NDH-1 shuttles electrons from NADH, via FMN and iron-sulfur (Fe-S) centers, to quinones in the respiratory chain. The immediate electron acceptor for the enzyme in this species is believed to be ubiquinone. Couples the redox reaction to proton translocation (for every two electrons transferred, four hydrogen ions are translocated across the cytoplasmic membrane), and thus conserves the redox energy in a proton gradient. The chain is NADH-quinone oxidoreductase subunit C/D from Cereibacter sphaeroides (strain KD131 / KCTC 12085) (Rhodobacter sphaeroides).